The sequence spans 86 residues: Small ribosomal subunit protein uS17 (86 aa).

This sequence belongs to the universal ribosomal protein uS17 family. Part of the 30S ribosomal subunit.

Its function is as follows. One of the primary rRNA binding proteins, it binds specifically to the 5'-end of 16S ribosomal RNA. The chain is Small ribosomal subunit protein uS17 from Lactococcus lactis subsp. cremoris (strain MG1363).